We begin with the raw amino-acid sequence, 540 residues long: Cytosolic carboxypeptidase 6 (540 aa).

The Peptidase M14 domain maps to 167 to 438 (YPYTYTRFQH…NVARTFLDYY (272 aa)). His230, Glu233, and His328 together coordinate Zn(2+). Residue Glu401 is the Proton donor/acceptor of the active site.

It belongs to the peptidase M14 family. Interacts with MYLK. Requires Zn(2+) as cofactor. Widely expressed. Expressed abundantly in testis, pituitary and brain and to a lower extent in eye, stomach, adrenal and kidney. In brain, expressed at low level in cerebellum as compared to cortex.

Its subcellular location is the cytoplasm. The protein resides in the cytosol. It is found in the cytoskeleton. The protein localises to the microtubule organizing center. It localises to the centrosome. Its subcellular location is the centriole. The protein resides in the golgi apparatus. It is found in the cilium basal body. The enzyme catalyses (L-glutamyl)(n+1)-gamma-L-glutamyl-L-glutamyl-[protein] + H2O = (L-glutamyl)(n)-gamma-L-glutamyl-L-glutamyl-[protein] + L-glutamate. The catalysed reaction is C-terminal L-alpha-aminoacyl-L-glutamyl-L-glutamyl-[tubulin] + H2O = C-terminal L-alpha-aminoacyl-L-glutamyl-[tubulin] + L-glutamate. Metallocarboxypeptidase that mediates protein deglutamylation of tubulin and non-tubulin target proteins. Catalyzes the removal of polyglutamate side chains present on the gamma-carboxyl group of glutamate residues within the C-terminal tail of tubulin protein. Specifically cleaves tubulin long-side-chains, while it is not able to remove the branching point glutamate. Also catalyzes the removal of polyglutamate residues from the carboxy-terminus of non-tubulin proteins such as MYLK. Mediates the deglutamylation of nucleotidyltransferase CGAS, leading to CGAS antiviral defense response activation. Involved in KLF4 deglutamylation which promotes KLF4 proteasome-mediated degradation, thereby negatively regulating cell pluripotency maintenance and embryogenesis. The chain is Cytosolic carboxypeptidase 6 from Mus musculus (Mouse).